Consider the following 308-residue polypeptide: Ornithine carbamoyltransferase (308 aa).

Carbamoyl phosphate is bound by residues 53–56 (STRT), Q80, R104, and 131–134 (HPCQ). L-ornithine contacts are provided by residues N162, D225, and 229 to 230 (SM). Carbamoyl phosphate-binding positions include 265 to 266 (CL) and R293.

The protein belongs to the aspartate/ornithine carbamoyltransferase superfamily. OTCase family.

It localises to the cytoplasm. The catalysed reaction is carbamoyl phosphate + L-ornithine = L-citrulline + phosphate + H(+). It functions in the pathway amino-acid biosynthesis; L-arginine biosynthesis; L-arginine from L-ornithine and carbamoyl phosphate: step 1/3. Functionally, reversibly catalyzes the transfer of the carbamoyl group from carbamoyl phosphate (CP) to the N(epsilon) atom of ornithine (ORN) to produce L-citrulline. This chain is Ornithine carbamoyltransferase (argF), found in Synechocystis sp. (strain ATCC 27184 / PCC 6803 / Kazusa).